Reading from the N-terminus, the 170-residue chain is CFA/I fimbrial subunit B (170 aa).

Residues 1 to 23 (MKFKKTIGAMALTTMFVAVSASA) form the signal peptide.

Belongs to the fimbrial CS1 protein family. CFA/I fimbriae are rather rigid, thread-like filaments of 0.5-1 micrometer, with an apparent axial hole, and a diameter of 7 nanometers. A single CFA/I fimbria consists of about 100 identical protein subunits.

It is found in the fimbrium. Fimbriae (also called pili), polar filaments radiating from the surface of the bacterium to a length of 0.5-1.5 micrometers and numbering 100-300 per cell, enable bacteria to colonize the epithelium of specific host organs. This Escherichia coli O78:H11 (strain H10407 / ETEC) protein is CFA/I fimbrial subunit B (cfaB).